The primary structure comprises 101 residues: Large ribosomal subunit protein uL24 (101 aa).

It belongs to the universal ribosomal protein uL24 family. In terms of assembly, part of the 50S ribosomal subunit.

In terms of biological role, one of two assembly initiator proteins, it binds directly to the 5'-end of the 23S rRNA, where it nucleates assembly of the 50S subunit. Functionally, one of the proteins that surrounds the polypeptide exit tunnel on the outside of the subunit. This Paracoccus denitrificans (strain Pd 1222) protein is Large ribosomal subunit protein uL24.